Here is a 370-residue protein sequence, read N- to C-terminus: MKSGRFIGVMSGTSLDGIDVVLAAIDERMVAQQASYCHPMPLQLKKDILGMCQGQSTTLSAVGKLDAQLGILFAEAVLALLAKAGLTAQDITAIGCHGQTVWHEPLGEPAFTMQLGDNNRIAAMTKIATVGDFRRRDMAYGGQGAPLVPAFHHALLAHSTERRMVLNIGGIANLSMLLPDLPVRGFDTGPGNMLMDAWIWRNRSLPYDKDAAWALSGQVNQPLLELMYSDPYFAKPAPKSTGREYFNAGWLDKQLNKIPGIKPEDVQATLAELTALSVAEQVQLAGGCERLLVCGGGARNPLVMSRMSTLLPGTEVCVTDDFGVSGDDMEALAFAWLAFRTLSGKSGNLPSVTGASCETILGAVYPVSSR.

12–19 is an ATP binding site; sequence GTSLDGID.

Belongs to the anhydro-N-acetylmuramic acid kinase family.

It carries out the reaction 1,6-anhydro-N-acetyl-beta-muramate + ATP + H2O = N-acetyl-D-muramate 6-phosphate + ADP + H(+). The protein operates within amino-sugar metabolism; 1,6-anhydro-N-acetylmuramate degradation. It functions in the pathway cell wall biogenesis; peptidoglycan recycling. In terms of biological role, catalyzes the specific phosphorylation of 1,6-anhydro-N-acetylmuramic acid (anhMurNAc) with the simultaneous cleavage of the 1,6-anhydro ring, generating MurNAc-6-P. Is required for the utilization of anhMurNAc either imported from the medium or derived from its own cell wall murein, and thus plays a role in cell wall recycling. This is Anhydro-N-acetylmuramic acid kinase from Yersinia enterocolitica serotype O:8 / biotype 1B (strain NCTC 13174 / 8081).